We begin with the raw amino-acid sequence, 189 residues long: MASKRALVILAKGAEEMETVIPVDIMRRAGIKVTVAGLAGKDPVQCSRDVMICPDTSLEDAKKQGPYDVVVLPGGNLGAQNLSESPVVKEILKEQESRKGLIAAICAGPTALLAHEIGFGSKVTTHPGAKDKMMNGSHYSYSESRVEKDGLILTSRGPGTSFEFALAIVEALSGKEAADQVKAPLVLKD.

N-acetylalanine; in Protein/nucleic acid deglycase DJ-1, N-terminally processed is present on A2. 2 S-palmitoyl cysteine lipidation sites follow: C46 and C53. Residue Y67 is modified to Phosphotyrosine. Catalysis depends on C106, which acts as the Nucleophile. C106 bears the Cysteine sulfinic acid (-SO2H); alternate mark. C106 carries S-palmitoyl cysteine; alternate lipidation. The active site involves H126. Residue K130 forms a Glycyl lysine isopeptide (Lys-Gly) (interchain with G-Cter in SUMO) linkage. N6-acetyllysine is present on K148. N6-succinyllysine is present on K182.

The protein belongs to the peptidase C56 family. As to quaternary structure, homodimer. Binds EFCAB6/DJBP and PIAS2. Part of a ternary complex containing PARK7, EFCAB6/DJBP and AR. Interacts (via N-terminus) with OTUD7B. Interacts with BBS1, HIPK1, CLCF1 and MTERF. Forms a complex with PINK1 and PRKN. Interacts (via C-terminus) with NCF1; the interaction is enhanced by LPS and modulates NCF1 phosphorylation and membrane translocation. Interacts with NENF. Deglycase activity does not require glutathione as a cofactor, however, glycated glutathione constitutes a PARK7 substrate. serves as cofactor. Sumoylated on Lys-130 by PIAS2 or PIAS4; which is essential for cell-growth promoting activity and transforming activity. Post-translationally, undergoes cleavage of a C-terminal peptide and subsequent activation of protease activity in response to oxidative stress. Detected in liver, heart, spleen and testis (at protein level). Detected in liver, heart, spleen, kidney, epididymidis, vas deferens, sperm cells and testis.

Its subcellular location is the cell membrane. The protein resides in the cytoplasm. It is found in the nucleus. The protein localises to the membrane raft. It localises to the mitochondrion. Its subcellular location is the endoplasmic reticulum. The enzyme catalyses N(omega)-(1-hydroxy-2-oxopropyl)-L-arginyl-[protein] + H2O = lactate + L-arginyl-[protein] + H(+). It carries out the reaction N(6)-(1-hydroxy-2-oxopropyl)-L-lysyl-[protein] + H2O = lactate + L-lysyl-[protein] + H(+). It catalyses the reaction S-(1-hydroxy-2-oxopropyl)-L-cysteinyl-[protein] + H2O = lactate + L-cysteinyl-[protein] + H(+). The catalysed reaction is N(omega)-(1-hydroxy-2-oxoethyl)-L-arginyl-[protein] + H2O = L-arginyl-[protein] + glycolate + H(+). The enzyme catalyses N(6)-(1-hydroxy-2-oxoethyl)-L-lysyl-[protein] + H2O = glycolate + L-lysyl-[protein] + H(+). It carries out the reaction S-(1-hydroxy-2-oxoethyl)-L-cysteinyl-[protein] + H2O = glycolate + L-cysteinyl-[protein] + H(+). It catalyses the reaction N(2)-(1-hydroxy-2-oxopropyl)-dGTP + H2O = lactate + dGTP + H(+). The catalysed reaction is N(2)-(1-hydroxy-2-oxopropyl)-GTP + H2O = lactate + GTP + H(+). The enzyme catalyses N(2)-(1-hydroxy-2-oxopropyl)-GDP + H2O = lactate + GDP + H(+). It carries out the reaction N(2)-(1-hydroxy-2-oxopropyl)-GMP + H2O = lactate + GMP + H(+). It catalyses the reaction N(2)-(1-hydroxy-2-oxoethyl)-dGTP + H2O = dGTP + glycolate + H(+). The catalysed reaction is N(2)-(1-hydroxy-2-oxoethyl)-GTP + H2O = glycolate + GTP + H(+). The enzyme catalyses N(2)-(1-hydroxy-2-oxoethyl)-GDP + H2O = glycolate + GDP + H(+). It carries out the reaction N(2)-(1-hydroxy-2-oxoethyl)-GMP + H2O = glycolate + GMP + H(+). It catalyses the reaction an N(2)-(1-hydroxy-2-oxopropyl)-guanosine in RNA + H2O = a guanosine in RNA + lactate + H(+). The catalysed reaction is an N(2)-(1-hydroxy-2-oxopropyl)-2'-deoxyguanosine in DNA + H2O = a 2'-deoxyguanosine in DNA + lactate + H(+). The enzyme catalyses an N(2)-(1-hydroxy-2-oxoethyl)-guanosine in RNA + H2O = a guanosine in RNA + glycolate + H(+). It carries out the reaction an N(2)-(1-hydroxy-2-oxoethyl)-2'-deoxyguanosine in DNA + H2O = a 2'-deoxyguanosine in DNA + glycolate + H(+). Functionally, multifunctional protein with controversial molecular function which plays an important role in cell protection against oxidative stress and cell death acting as oxidative stress sensor and redox-sensitive chaperone and protease. It is involved in neuroprotective mechanisms like the stabilization of NFE2L2 and PINK1 proteins, male fertility as a positive regulator of androgen signaling pathway as well as cell growth and transformation through, for instance, the modulation of NF-kappa-B signaling pathway. Has been described as a protein and nucleotide deglycase that catalyzes the deglycation of the Maillard adducts formed between amino groups of proteins or nucleotides and reactive carbonyl groups of glyoxals. But this function is rebuted by other works. As a protein deglycase, repairs methylglyoxal- and glyoxal-glycated proteins, and releases repaired proteins and lactate or glycolate, respectively. Deglycates cysteine, arginine and lysine residues in proteins, and thus reactivates these proteins by reversing glycation by glyoxals. Acts on early glycation intermediates (hemithioacetals and aminocarbinols), preventing the formation of advanced glycation endproducts (AGE) that cause irreversible damage. Also functions as a nucleotide deglycase able to repair glycated guanine in the free nucleotide pool (GTP, GDP, GMP, dGTP) and in DNA and RNA. Is thus involved in a major nucleotide repair system named guanine glycation repair (GG repair), dedicated to reversing methylglyoxal and glyoxal damage via nucleotide sanitization and direct nucleic acid repair. Protects histones from adduction by methylglyoxal, controls the levels of methylglyoxal-derived argininine modifications on chromatin. Able to remove the glycations and restore histone 3, histone glycation disrupts both local and global chromatin architecture by altering histone-DNA interactions as well as histone acetylation and ubiquitination levels. Displays a very low glyoxalase activity that may reflect its deglycase activity. Eliminates hydrogen peroxide and protects cells against hydrogen peroxide-induced cell death. Required for correct mitochondrial morphology and function as well as for autophagy of dysfunctional mitochondria. Plays a role in regulating expression or stability of the mitochondrial uncoupling proteins SLC25A14 and SLC25A27 in dopaminergic neurons of the substantia nigra pars compacta and attenuates the oxidative stress induced by calcium entry into the neurons via L-type channels during pacemaking. Regulates astrocyte inflammatory responses, may modulate lipid rafts-dependent endocytosis in astrocytes and neuronal cells. In pancreatic islets, involved in the maintenance of mitochondrial reactive oxygen species (ROS) levels and glucose homeostasis in an age- and diet dependent manner. Protects pancreatic beta cells from cell death induced by inflammatory and cytotoxic setting. Binds to a number of mRNAs containing multiple copies of GG or CC motifs and partially inhibits their translation but dissociates following oxidative stress. Metal-binding protein able to bind copper as well as toxic mercury ions, enhances the cell protection mechanism against induced metal toxicity. In macrophages, interacts with the NADPH oxidase subunit NCF1 to direct NADPH oxidase-dependent ROS production, and protects against sepsis. In Mesocricetus auratus (Golden hamster), this protein is Parkinson disease protein 7 homolog (PARK7).